A 927-amino-acid chain; its full sequence is Disks large homolog 1 (927 aa).

The 61-residue stretch at arginine 4 to proline 64 folds into the L27 domain. PDZ domains follow at residues glutamate 223–lysine 310, aspartate 318–threonine 405, and lysine 466–proline 547. Residues lysine 581–glutamate 651 form the SH3 domain. Residues aspartate 692–glutamine 719 form a disordered region. The span at histidine 704–arginine 717 shows a compositional bias: polar residues. The 176-residue stretch at serine 737 to glutamate 912 folds into the Guanylate kinase-like domain.

Belongs to the MAGUK family.

It is found in the cell membrane. The protein resides in the endoplasmic reticulum membrane. Its subcellular location is the cell junction. The protein localises to the cytoplasm. It localises to the apical cell membrane. Functionally, essential multidomain scaffolding protein required for normal development. Recruits channels, receptors and signaling molecules to discrete plasma membrane domains in polarized cells. Promotes epithelial cell layer barrier function via maintaining cell-cell adhesion. May play a role in adherens junction assembly, signal transduction and cell proliferation. This chain is Disks large homolog 1 (dlg1), found in Xenopus tropicalis (Western clawed frog).